Here is a 526-residue protein sequence, read N- to C-terminus: Cytochrome P450 monooxygenase COX2 (526 aa).

Asn-11 is a glycosylation site (N-linked (GlcNAc...) asparagine). A helical transmembrane segment spans residues 12-31 (ITTNHVAAAVCAGIAVYAIV). N-linked (GlcNAc...) asparagine glycosylation occurs at Asn-302. Cys-450 provides a ligand contact to heme.

The protein belongs to the cytochrome P450 family. The cofactor is heme.

The protein localises to the membrane. The protein operates within secondary metabolite biosynthesis. Its function is as follows. Cytochrome P450 monooxygenase; part of the gene cluster that mediates the biosynthesis of alpha-cuprenene and oxidized derivatives. The alpha-cuprenene synthase COP6 is the only sesquiterpene synthase identified in C.cinereus that appears to be part of a biosynthetic gene cluster and is highly specific since it catalyzes the cyclization of (2E,6E)-farnesyl diphosphate into only one product, alpha-cuprenene. The cytochrome P450 monooxygenase COX2 then oxidizes the cyclohexadiene ring of alpha-cuprenene at positions 1 and 4, yielding first alpha-cuparene, followed by alpha-cuparophenol and a further yet unidentified compound resulting from one additional oxidation step. The cytochrome P450 monooxygenase COX1 then likely catalyzes the oxidation at position 9 of the pentane ring of alpha-cuprenene to give the corresponding hydroxy or ketone derivatives. This chain is Cytochrome P450 monooxygenase COX2, found in Coprinopsis cinerea (strain Okayama-7 / 130 / ATCC MYA-4618 / FGSC 9003) (Inky cap fungus).